A 137-amino-acid chain; its full sequence is MKNLLVFIFVFSLCMFDHVSGAGIRIGNELKFQKLLWMRCYSKDDVLGPKIIPIGGHFVTYFSVNIWRTTRFMCTLKQGPNYRHYQNFTAFKLFGMEDHGDVWDWRARENEIYLKKKEGGKFIKNPVNMHKVYDWIN.

Residues 1–21 (MKNLLVFIFVFSLCMFDHVSG) form the signal peptide. Residue Asn-87 is glycosylated (N-linked (GlcNAc...) asparagine).

This sequence belongs to the plant self-incompatibility (S1) protein family.

The protein localises to the secreted. The protein is S-protein homolog 16 of Arabidopsis thaliana (Mouse-ear cress).